The primary structure comprises 239 residues: Ribonuclease PH (239 aa).

Residues R86 and G124–R126 each bind phosphate.

The protein belongs to the RNase PH family. As to quaternary structure, homohexameric ring arranged as a trimer of dimers.

The enzyme catalyses tRNA(n+1) + phosphate = tRNA(n) + a ribonucleoside 5'-diphosphate. Functionally, phosphorolytic 3'-5' exoribonuclease that plays an important role in tRNA 3'-end maturation. Removes nucleotide residues following the 3'-CCA terminus of tRNAs; can also add nucleotides to the ends of RNA molecules by using nucleoside diphosphates as substrates, but this may not be physiologically important. Probably plays a role in initiation of 16S rRNA degradation (leading to ribosome degradation) during starvation. The chain is Ribonuclease PH from Rickettsia africae (strain ESF-5).